The chain runs to 453 residues: MENYLQGCRAALQESRPIHVVLGNEACDLDSMVSALALAFYLAKTTEAEEVFVPVLNIKRSELPLRGDNVFFLQKIHIPESVLIFRDEIDLHALHQAGQLTLILVDHHVLPKSDAALEEAVAEVLDHRPIDQRHCPPCHVSVELVGSCATLVAERILQGAPEILDRQTAALLHGTILLDCVNMDLKIGKATLKDSHYVEKLEALFPDLPSRNDIFDSLQKAKFDVSGLTTEQMLRKDQKTISRQGTKVAISAIYMDMEAFLQRSGLLADLRAFCQAHSYDALVAMTIFFNTYNEPVRQLAVFCPHAALRMTICGILEHSHSPPLKLTPVPSSHPDLQAYLQGNTQISRKKVLPLLQEALSAYFDSTNIPLGQPETEGVSREQVDKELDRAGNSLLSGLSQDEEEPPLPPTPMNSLVDECPLDQGLPKFSAEVIFEKCSQISLSEPTTASLSKK.

M1 carries the N-acetylmethionine modification. D28, D30, D106, and D179 together coordinate Mn(2+). A DHH motif motif is present at residues 106 to 108; sequence DHH. Residues 393–420 form an essential for homodimerization region; that stretch reads SLLSGLSQDEEEPPLPPTPMNSLVDECP. A disordered region spans residues 396-419; sequence SGLSQDEEEPPLPPTPMNSLVDEC. At S399 the chain carries Phosphoserine. A Phosphothreonine modification is found at T410. S414 is subject to Phosphoserine.

This sequence belongs to the PPase class C family. Prune subfamily. In terms of assembly, homooligomer. Able to homodimerize via its C-terminal domain. Interacts with NME1. Interacts with GSK3; at focal adhesion complexes where paxillin and vinculin are colocalized. Requires Mn(2+) as cofactor.

Its subcellular location is the cytoplasm. It localises to the nucleus. It is found in the cell junction. The protein resides in the focal adhesion. The catalysed reaction is diphosphate + H2O = 2 phosphate + H(+). Its activity is regulated as follows. Activated by magnesium ions and inhibited by manganese ions. Inhibited by dipyridamole, moderately sensitive to IBMX and inhibited by vinpocetine. Its function is as follows. Phosphodiesterase (PDE) that has higher activity toward cAMP than cGMP, as substrate. Plays a role in cell proliferation, is able to induce cell motility and acts as a negative regulator of NME1. The polypeptide is Exopolyphosphatase PRUNE1 (PRUNE1) (Bos taurus (Bovine)).